Consider the following 99-residue polypeptide: Nucleoid-associated protein SPy_1862/M5005_Spy1580 (99 aa).

The protein belongs to the YbaB/EbfC family. As to quaternary structure, homodimer.

Its subcellular location is the cytoplasm. The protein localises to the nucleoid. Binds to DNA and alters its conformation. May be involved in regulation of gene expression, nucleoid organization and DNA protection. This Streptococcus pyogenes serotype M1 protein is Nucleoid-associated protein SPy_1862/M5005_Spy1580.